Here is a 337-residue protein sequence, read N- to C-terminus: Major envelope glycoprotein (337 aa).

Residues Asn-76, Asn-114, Asn-271, and Asn-301 are each glycosylated (N-linked (GlcNAc...) asparagine; by host).

The protein belongs to the baculoviridae gp64 family. In terms of processing, palmitoylated.

It is found in the virion membrane. The protein localises to the host cell membrane. Functionally, envelope phosphoglycoprotein which mediates the fusion of viral and host endosomal membranes leading to virus entry into the host cell. The protein is Major envelope glycoprotein (GP67) of Lepidoptera (butterflies and moths).